We begin with the raw amino-acid sequence, 437 residues long: Transcription factor 12 (437 aa).

Disordered stretches follow at residues 1 to 68 (EFHD…QTGD), 80 to 123 (PDHT…YENS), and 244 to 335 (ASNT…ERRM). Residues 13–37 (VSPTDISTSLPPMSSFHRGSTSSSP) are compositionally biased toward polar residues. Position 44 is a phosphothreonine (Thr44). The residue at position 64 (Ser64) is a Phosphoserine. Residues 83 to 94 (TSSSFPSNPSTP) show a composition bias toward low complexity. Polar residues-rich tracts occupy residues 95 to 107 (VGSP…TSQW) and 114 to 123 (APSSPSYENS). Basic and acidic residues-rich tracts occupy residues 273 to 285 (IKTE…ENLH) and 291 to 306 (DDMK…DIKV). Residue Lys274 forms a Glycyl lysine isopeptide (Lys-Gly) (interchain with G-Cter in SUMO2) linkage. Ser295 bears the Phosphoserine mark. Residue Lys305 forms a Glycyl lysine isopeptide (Lys-Gly) (interchain with G-Cter in SUMO2) linkage. Residue Thr312 is modified to Phosphothreonine. Phosphoserine is present on residues Ser313 and Ser314. Residues 323–335 (PEQKIEREKERRM) show a composition bias toward basic and acidic residues. Positions 332–385 (ERRMANNARERLRVRDINEAFKELGRMCQLHLKSEKPQTKLLILHQAVAVILSL) constitute a bHLH domain. Residues Lys364 and Lys408 each participate in a glycyl lysine isopeptide (Lys-Gly) (interchain with G-Cter in SUMO2) cross-link. Positions 387–410 (QQVRERNLNPKAACLKRREEEKVS) are class A specific domain. Residues 405–437 (EEEKVSAASAEPPTTLPGTHPGLSETTNPMGHL) are disordered. Residues 416–427 (PPTTLPGTHPGL) are compositionally biased toward low complexity. Residues 428 to 437 (SETTNPMGHL) are compositionally biased toward polar residues.

As to quaternary structure, efficient DNA binding requires dimerization with another bHLH protein. Forms homo- or heterooligomers with myogenin, E12 and ITF2 proteins. Interacts with NEUROD2. Interacts with PTF1A. Interacts with RUNX1T1. Interacts with BHLHA9.

The protein resides in the nucleus. Functionally, transcriptional regulator. Involved in the initiation of neuronal differentiation. Activates transcription by binding to the E box (5'-CANNTG-3'). Participates in the control of inducible RP4 gene expression in salivary cells. Binds to the RIPE3 element of the insulin II promoter. May be involved in the functional network that regulates the development of the GnRH axis. The protein is Transcription factor 12 (TCF12) of Mesocricetus auratus (Golden hamster).